Here is a 417-residue protein sequence, read N- to C-terminus: Serine--tRNA ligase (417 aa).

Position 226-228 (226-228 (TSE)) interacts with L-serine. ATP is bound by residues 257–259 (RRE) and valine 273. Glutamate 280 is an L-serine binding site. 344 to 347 (EVTS) serves as a coordination point for ATP. Residue threonine 379 participates in L-serine binding.

This sequence belongs to the class-II aminoacyl-tRNA synthetase family. Type-1 seryl-tRNA synthetase subfamily. In terms of assembly, homodimer. The tRNA molecule binds across the dimer.

The protein resides in the cytoplasm. It catalyses the reaction tRNA(Ser) + L-serine + ATP = L-seryl-tRNA(Ser) + AMP + diphosphate + H(+). It carries out the reaction tRNA(Sec) + L-serine + ATP = L-seryl-tRNA(Sec) + AMP + diphosphate + H(+). It functions in the pathway aminoacyl-tRNA biosynthesis; selenocysteinyl-tRNA(Sec) biosynthesis; L-seryl-tRNA(Sec) from L-serine and tRNA(Sec): step 1/1. Its function is as follows. Catalyzes the attachment of serine to tRNA(Ser). Is also able to aminoacylate tRNA(Sec) with serine, to form the misacylated tRNA L-seryl-tRNA(Sec), which will be further converted into selenocysteinyl-tRNA(Sec). This Tropheryma whipplei (strain TW08/27) (Whipple's bacillus) protein is Serine--tRNA ligase.